Here is a 290-residue protein sequence, read N- to C-terminus: Purine nucleoside phosphorylase (290 aa).

68–69 serves as a coordination point for phosphate; the sequence is RN. Met-204 provides a ligand contact to substrate. Residue Thr-205 coordinates phosphate.

The protein belongs to the PNP/MTAP phosphorylase family. MTAP subfamily. In terms of assembly, homotrimer.

Its subcellular location is the cytoplasm. The protein localises to the nucleus. It catalyses the reaction a purine D-ribonucleoside + phosphate = a purine nucleobase + alpha-D-ribose 1-phosphate. The protein operates within purine metabolism; purine nucleoside salvage. In terms of biological role, purine nucleoside phosphorylase involved in purine salvage. The polypeptide is Purine nucleoside phosphorylase (Drosophila melanogaster (Fruit fly)).